We begin with the raw amino-acid sequence, 268 residues long: 1,4-dihydroxy-2-naphthoyl-CoA synthase (268 aa).

Residues 30 to 31, 70 to 74, 114 to 118, Ser140, and Ser146 each bind substrate; these read VL, VGGDQ, and YAVGG. 139-141 is a hydrogencarbonate binding site; sequence QSG.

This sequence belongs to the enoyl-CoA hydratase/isomerase family. MenB subfamily. Hydrogencarbonate is required as a cofactor.

The protein resides in the plastid. The protein localises to the chloroplast. The catalysed reaction is 2-succinylbenzoyl-CoA + H(+) = 1,4-dihydroxy-2-naphthoyl-CoA + H2O. It functions in the pathway quinol/quinone metabolism; 1,4-dihydroxy-2-naphthoate biosynthesis; 1,4-dihydroxy-2-naphthoate from chorismate: step 6/7. It participates in quinol/quinone metabolism; menaquinone biosynthesis. In terms of biological role, converts o-succinylbenzoyl-CoA (OSB-CoA) to 1,4-dihydroxy-2-naphthoyl-CoA (DHNA-CoA). The polypeptide is 1,4-dihydroxy-2-naphthoyl-CoA synthase (menB) (Cyanidium caldarium (Red alga)).